The sequence spans 668 residues: E3 ubiquitin-protein ligase RNF139 (668 aa).

At alanine 2 the chain carries N-acetylalanine. 11 helical membrane-spanning segments follow: residues isoleucine 51–leucine 71, alanine 85–phenylalanine 105, serine 125–leucine 145, leucine 154–isoleucine 174, valine 178–leucine 198, glycine 293–isoleucine 313, leucine 323–leucine 343, methionine 356–methionine 376, phenylalanine 390–leucine 410, leucine 420–valine 440, and isoleucine 470–glutamate 490. The segment at cysteine 547–histidine 586 adopts an RING-type; atypical zinc-finger fold. The tract at residues serine 602 to aspartate 668 is disordered. Over residues glutamate 618–glutamate 630 the composition is skewed to basic and acidic residues. The span at leucine 631–aspartate 641 shows a compositional bias: acidic residues. Residue serine 636 is modified to Phosphoserine. Threonine 637 and threonine 667 each carry phosphothreonine.

As to quaternary structure, interacts with VHL. Interacts with MHC class I and HM13. Component of SCAP-SREBP complex composed of SREBF2, SCAP and RNF139; the complex hampers the interaction between SCAP and SEC24B, thereby reducing SREBF2 proteolytic processing. Interacts with SREBF2 (via C-terminal domain). Interacts with SCAP; the interaction inhibits the interaction of SCAP with SEC24B and hampering the ER to Golgi transport of the SCAP-SREBP complex. Interacts with SEC24B. Interacts with INSIG1 and INSIG2. Interacts with EIF3F and EIF3H; the interaction leads to protein translation inhibitions in a ubiquitination-dependent manner. Interacts with XBP1 isoform 1; the interaction induces ubiquitination and degradation of XBP1 isoform 1. Interacts with AUP1, AMFR and UBE2G2; interaction with AUP1 facilitates interaction of RNF139 with ubiquitin-conjugating enzyme UBE2G2 and ubiquitin ligase AMFR/gp78, leading to sterol-induced ubiquitination of HMGCR and its subsequent proteasomal degradation. Autoubiquitinated. Ubiquitination is induced by sterol and leads to ist degradation via the ubiquitin-proteasome pathway.

It is found in the endoplasmic reticulum membrane. It catalyses the reaction S-ubiquitinyl-[E2 ubiquitin-conjugating enzyme]-L-cysteine + [acceptor protein]-L-lysine = [E2 ubiquitin-conjugating enzyme]-L-cysteine + N(6)-ubiquitinyl-[acceptor protein]-L-lysine.. It functions in the pathway protein modification; protein ubiquitination. E3-ubiquitin ligase; acts as a negative regulator of cell proliferation through mechanisms involving G2/M arrest and cell death. Required for MHC class I ubiquitination in cells expressing the cytomegalovirus protein US2 before dislocation from the endoplasmic reticulum (ER). Affects SREBP processing by hindering the SREBP-SCAP complex translocation from the ER to the Golgi, thereby reducing SREBF2 target gene expression. Involved in the sterol-accelerated degradation of HMGCR. This is achieved through binding to INSIG1 and/or INSIG2 at the ER membrane. In addition, interaction of RNF139 with AUP1 facilitates interaction of RNF139 with ubiquitin-conjugating enzyme UBE2G2 and ubiquitin ligase AMFR, leading to ubiquitination of HMGCR. The ubiquitinated HMGCR is then released from the ER by the complex into the cytosol for subsequent destruction. Required for INSIG1 ubiquitination. May be required for EIF3 complex ubiquitination. In Mus musculus (Mouse), this protein is E3 ubiquitin-protein ligase RNF139.